The primary structure comprises 376 residues: Chaperone protein DnaJ (376 aa).

Residues 4–69 (DFYETLGVQK…QKRAAYDRFG (66 aa)) form the J domain. The CR-type zinc-finger motif lies at 133–211 (GKTAQIRVPA…CAGQGRVTEE (79 aa)). The Zn(2+) site is built by cysteine 146, cysteine 149, cysteine 163, cysteine 166, cysteine 185, cysteine 188, cysteine 199, and cysteine 202. CXXCXGXG motif repeat units lie at residues 146-153 (CTECSGSG), 163-170 (CSMCHGHG), 185-192 (CPQCQGRG), and 199-206 (CPKCAGQG).

This sequence belongs to the DnaJ family. In terms of assembly, homodimer. The cofactor is Zn(2+).

It is found in the cytoplasm. Participates actively in the response to hyperosmotic and heat shock by preventing the aggregation of stress-denatured proteins and by disaggregating proteins, also in an autonomous, DnaK-independent fashion. Unfolded proteins bind initially to DnaJ; upon interaction with the DnaJ-bound protein, DnaK hydrolyzes its bound ATP, resulting in the formation of a stable complex. GrpE releases ADP from DnaK; ATP binding to DnaK triggers the release of the substrate protein, thus completing the reaction cycle. Several rounds of ATP-dependent interactions between DnaJ, DnaK and GrpE are required for fully efficient folding. Also involved, together with DnaK and GrpE, in the DNA replication of plasmids through activation of initiation proteins. The protein is Chaperone protein DnaJ of Mesorhizobium japonicum (strain LMG 29417 / CECT 9101 / MAFF 303099) (Mesorhizobium loti (strain MAFF 303099)).